Here is a 420-residue protein sequence, read N- to C-terminus: UDP-N-acetylglucosamine 1-carboxyvinyltransferase (420 aa).

Residue 22–23 (KN) coordinates phosphoenolpyruvate. Arg-93 provides a ligand contact to UDP-N-acetyl-alpha-D-glucosamine. Catalysis depends on Cys-117, which acts as the Proton donor. Cys-117 carries the post-translational modification 2-(S-cysteinyl)pyruvic acid O-phosphothioketal. UDP-N-acetyl-alpha-D-glucosamine contacts are provided by Asp-307 and Ile-329.

This sequence belongs to the EPSP synthase family. MurA subfamily.

It localises to the cytoplasm. It catalyses the reaction phosphoenolpyruvate + UDP-N-acetyl-alpha-D-glucosamine = UDP-N-acetyl-3-O-(1-carboxyvinyl)-alpha-D-glucosamine + phosphate. Its pathway is cell wall biogenesis; peptidoglycan biosynthesis. Its function is as follows. Cell wall formation. Adds enolpyruvyl to UDP-N-acetylglucosamine. This Alteromonas mediterranea (strain DSM 17117 / CIP 110805 / LMG 28347 / Deep ecotype) protein is UDP-N-acetylglucosamine 1-carboxyvinyltransferase.